The chain runs to 183 residues: Pyruvoyl-dependent arginine decarboxylase 2 (183 aa).

Ser-41 is modified (pyruvic acid (Ser)).

This sequence belongs to the PdaD family. Pyruvate is required as a cofactor.

The catalysed reaction is L-arginine + H(+) = agmatine + CO2. The protein is Pyruvoyl-dependent arginine decarboxylase 2 (pdaD2) of Methanosarcina mazei (strain ATCC BAA-159 / DSM 3647 / Goe1 / Go1 / JCM 11833 / OCM 88) (Methanosarcina frisia).